A 313-amino-acid chain; its full sequence is Olfactory receptor 56A4 (313 aa).

Topologically, residues 1 to 28 (MASPSNDSTAPVSEFLLICFPNFQSWQH) are extracellular. N-linked (GlcNAc...) asparagine glycosylation is present at N6. Residues 29–49 (WLSLPLSLLFLLAMGANTTLL) traverse the membrane as a helical segment. Over 50–57 (ITIQLEAS) the chain is Cytoplasmic. The helical transmembrane segment at 58–78 (LHQPLYYLLSLLSLLDIVLCL) threads the bilayer. Residues 79–102 (TVIPKVLAIFWFDLRSISFPACFL) are Extracellular-facing. Cysteines 100 and 192 form a disulfide. The helical transmembrane segment at 103–123 (QMFIMNSFLTMESCTFMVMAY) threads the bilayer. Over 124–142 (DRYVAICHPLRYPSIITDQ) the chain is Cytoplasmic. The chain crosses the membrane as a helical span at residues 143–163 (FVARAVVFVIARNAFVSLPVP). Residues 164–199 (MLSARLRYCAGNIIKNCICSNLSVSKLSCDDITFNQ) are Extracellular-facing. The N-linked (GlcNAc...) asparagine glycan is linked to N184. The chain crosses the membrane as a helical span at residues 200-220 (LYQFVAGWTLLGSDLILIVIS). Residues 221–240 (YSFILKVVLRIKAEGAVAKA) lie on the Cytoplasmic side of the membrane. Residues 241-261 (LSTCGSHFILILFFSTVLLVL) traverse the membrane as a helical segment. The Extracellular portion of the chain corresponds to 262 to 276 (VITNLARKRIPPDVP). Residues 277–297 (ILLNILHHLIPPALNPIVYGV) form a helical membrane-spanning segment. Residues 298–313 (RTKEIKQGIQNLLKRL) are Cytoplasmic-facing.

The protein belongs to the G-protein coupled receptor 1 family.

It is found in the cell membrane. Functionally, odorant receptor. The sequence is that of Olfactory receptor 56A4 (OR56A4) from Homo sapiens (Human).